The primary structure comprises 174 residues: Protein FanG (174 aa).

Positions 1-21 are cleaved as a signal peptide; the sequence is MKKLYKAITVICILMSNLQSA. Residues cysteine 41 and cysteine 75 are joined by a disulfide bond.

Its subcellular location is the fimbrium. In terms of biological role, involved in the biosynthesis of K99 fimbriae. This chain is Protein FanG (fanG), found in Escherichia coli.